We begin with the raw amino-acid sequence, 124 residues long: Holo-[acyl-carrier-protein] synthase (124 aa).

Mg(2+)-binding residues include Asp8 and Glu58.

The protein belongs to the P-Pant transferase superfamily. AcpS family. Requires Mg(2+) as cofactor.

It is found in the cytoplasm. It catalyses the reaction apo-[ACP] + CoA = holo-[ACP] + adenosine 3',5'-bisphosphate + H(+). Functionally, transfers the 4'-phosphopantetheine moiety from coenzyme A to a Ser of acyl-carrier-protein. The protein is Holo-[acyl-carrier-protein] synthase of Lacticaseibacillus casei (strain BL23) (Lactobacillus casei).